The following is an 850-amino-acid chain: MSGESGQPQPGPSHAGLYLEHPERDQAGVPGGVIRRADSQRRRSWIQKVIEQITGSPRQCVTLSEVVPVTVLAVQRYLLEDEPRDTVPKPPLYCYDVTISDGVYQEKCYLDPSLNFLVYQNILKVGIEMRISRVSCLYNEKRLGQGILCIDKVHCGESLDVISVETPFRNRAHEEKPERPLRGGKSHYLALWNNEDPYGDIWKTNKQPEEFNFNNIKIISLSHLELTWNSRKNFPALLVRVLHKSKLRYYGKPNKKMIEPYQTYLEVADSSGMVSVILWNALCPEWYKSLRVGLVLLLQDYTVKKSYPLRIQPDPADPQMKLISTMEICLNLRDPPTNIVIIPEKQLKSEWKLPKLINRFITRSELDDMPEKSICDVIGLLSFVGRVQRSKKKENSEDFWSYRWIHITDGTSEQPFIVQLFSTSQPEVFENIYPMTYFVCTQLKVVRNNSQVPKLLYLTTTNESRALTTGGHRGLPYTYDTKAKKIIQWIKTKTNLEAKNTVIGGYYPYPPVPETFSKYSRFIKAESLLTTISEVKKVIEDLQYREQKRIAIQGIITAIKYIPYKHSAGSAPAPEAFWNASRPSTSQAAGKEDHCHERGSKRSQDDRPMGSQHFQYTSKVLSLCAKRKILQGPSANPVPVPQPHSSAQMKGSKHNTPSQESSTAYTTGKSRRITNDRWESQLWQDKKFSLRDHLHYGHVDPESIPRKFILEHEKFLTQQFNSQPAKYIPPEGKPPKLDEFQSARSLGHFEVTILGLNHEIAIDVAFLPMYSPEDVQASQIDTFLTCMNFSCVYPPAAPLSGRLPDPKAVAGDIVKAAADLDRVHIIGILDICNLGNNKVEVCLQKIYTPE.

The tract at residues 1–31 (MSGESGQPQPGPSHAGLYLEHPERDQAGVPG) is disordered. The segment at residues 228 to 331 (WNSRKNFPAL…LISTMEICLN (104 aa)) is a DNA-binding region (OB). Disordered stretches follow at residues 575-612 (EAFW…MGSQ) and 632-671 (GPSA…GKSR). Residues 590-608 (GKEDHCHERGSKRSQDDRP) are compositionally biased toward basic and acidic residues. Polar residues predominate over residues 643–668 (PHSSAQMKGSKHNTPSQESSTAYTTG).

Its subcellular location is the chromosome. In terms of biological role, single-stranded DNA-binding protein recruited to replication forks to maintain genome stability. Prevents fork collapse by antagonizing the accumulation of RAD51 at forks to ensure the proper balance of fork remodeling and protection without interfering with the capacity of cells to complete homologous recombination of double-strand breaks. This chain is RPA-related protein RADX, found in Mus musculus (Mouse).